A 347-amino-acid polypeptide reads, in one-letter code: Ribosomal RNA large subunit methyltransferase M (347 aa).

S-adenosyl-L-methionine-binding positions include serine 184, 217-220 (APGG), aspartate 236, aspartate 256, and aspartate 272. The active-site Proton acceptor is the lysine 301.

The protein belongs to the class I-like SAM-binding methyltransferase superfamily. RNA methyltransferase RlmE family. RlmM subfamily. As to quaternary structure, monomer.

It is found in the cytoplasm. It catalyses the reaction cytidine(2498) in 23S rRNA + S-adenosyl-L-methionine = 2'-O-methylcytidine(2498) in 23S rRNA + S-adenosyl-L-homocysteine + H(+). Functionally, catalyzes the 2'-O-methylation at nucleotide C2498 in 23S rRNA. This Xanthomonas oryzae pv. oryzae (strain KACC10331 / KXO85) protein is Ribosomal RNA large subunit methyltransferase M.